A 541-amino-acid polypeptide reads, in one-letter code: Ankyrin repeat domain-containing protein 13C (541 aa).

Residues 1-20 (MTGEKIRSLRRDHKPSKEEG) show a composition bias toward basic and acidic residues. The segment at 1–27 (MTGEKIRSLRRDHKPSKEEGDLLEPGD) is disordered. ANK repeat units lie at residues 111–142 (PAHYPVHECVFKGDVRRLSSLIRTHNIGQKDN), 143–172 (HGNTPLHLAVMLGNKECAHLLLAHNAPVKV), and 176–205 (QGWSPLAEAISYGDRQMITALLRKLKQQSR). Residue Ser-411 is modified to Phosphoserine.

The protein localises to the endoplasmic reticulum membrane. Acts as a molecular chaperone for G protein-coupled receptors, regulating their biogenesis and exit from the ER. The protein is Ankyrin repeat domain-containing protein 13C (ANKRD13C) of Homo sapiens (Human).